Here is a 395-residue protein sequence, read N- to C-terminus: General transcription factor IIH subunit 2-like protein (395 aa).

A VWFA domain is found at 60-236; sequence HLYVVVDGSR…HYKELLTHHL (177 aa). Tyrosine 95 carries the post-translational modification Phosphotyrosine. The C4-type zinc finger occupies 291–308; that stretch reads CPQCRAKYCELPVECKIC.

This sequence belongs to the GTF2H2 family.

The protein localises to the nucleus. Component of the core-TFIIH basal transcription factor involved in nucleotide excision repair (NER) of DNA and, when complexed to CAK, in RNA transcription by RNA polymerase II. This chain is General transcription factor IIH subunit 2-like protein (GTF2H2C), found in Homo sapiens (Human).